Reading from the N-terminus, the 128-residue chain is Modulator protein MzrA (128 aa).

At 1–13 (MLALLRPYLSTRV) the chain is on the cytoplasmic side. A helical transmembrane segment spans residues 14–34 (LCVLVVCFSALMLVAFIPTLF). Topologically, residues 35-128 (RNDTALQIRA…RLSLRKQSVG (94 aa)) are periplasmic.

It belongs to the MzrA family. As to quaternary structure, interacts with EnvZ.

The protein resides in the cell inner membrane. Its function is as follows. Modulates the activity of the EnvZ/OmpR two-component regulatory system, probably by directly modulating EnvZ enzymatic activity and increasing stability of phosphorylated OmpR. This Erwinia billingiae (strain Eb661) protein is Modulator protein MzrA.